A 543-amino-acid chain; its full sequence is T-complex protein 1 subunit gamma (543 aa).

This sequence belongs to the TCP-1 chaperonin family.

The protein localises to the cytoplasm. In terms of biological role, molecular chaperone; assists the folding of proteins upon ATP hydrolysis. Known to play a role, in vitro, in the folding of actin and tubulin. Plays a role in microtubule polymerization. This Caenorhabditis elegans protein is T-complex protein 1 subunit gamma.